We begin with the raw amino-acid sequence, 668 residues long: L-type lectin-domain containing receptor kinase I.7 (668 aa).

Positions 1–21 (MIRGLLLGIIWMIFCVCSSFQ) are cleaved as a signal peptide. Residues 22 to 285 (QETPFVYNNF…SSTKKKSTSP (264 aa)) lie on the Extracellular side of the membrane. The segment at 24–256 (TPFVYNNFGH…YQYILGWSFS (233 aa)) is legume-lectin like. Asparagine 56, asparagine 125, asparagine 167, asparagine 201, and asparagine 223 each carry an N-linked (GlcNAc...) asparagine glycan. A helical membrane pass occupies residues 286–306 (VLSVLLGLIAFIVLGILVVAY). The Cytoplasmic segment spans residues 307 to 668 (LYRRNLYSEV…THSVLYGSGR (362 aa)). Residues 341 to 620 (FNRSEFLGRG…LNGNLALPEF (280 aa)) form the Protein kinase domain. ATP-binding positions include 347–355 (LGRGGFGEV) and lysine 372. Catalysis depends on aspartate 468, which acts as the Proton acceptor.

The protein in the C-terminal section; belongs to the protein kinase superfamily. Ser/Thr protein kinase family. This sequence in the N-terminal section; belongs to the leguminous lectin family.

It localises to the cell membrane. It catalyses the reaction L-seryl-[protein] + ATP = O-phospho-L-seryl-[protein] + ADP + H(+). It carries out the reaction L-threonyl-[protein] + ATP = O-phospho-L-threonyl-[protein] + ADP + H(+). Involved in resistance response to the pathogenic oomycetes Phytophthora infestans and Phytophthora capsici. In Arabidopsis thaliana (Mouse-ear cress), this protein is L-type lectin-domain containing receptor kinase I.7.